Here is a 564-residue protein sequence, read N- to C-terminus: MPIRLSKEKINDLLQRSQGDLTSSQDEIVHYTDVFIAGSGPIACTYARHIIDNTSTTKVYMAEIGSQDNPVIGAHHRNSIKFQKDTDKFVNIINGALQPISISPSDTYQPTLAVAAWAPPIDPAEGQLVIMGHNPNQEAGLNLPGSAVTRTVGGMATHWTCACPTPHDEERVNNPVDKQEFDALLERAKTLLNVHSDQYDDSIRQIVVKETLQQTLDASRGVTTLPLGVERRTDNPIYVTWTGADTVLGDVPKSPRFVLVTETRVTKFIVSETNPTQVVAALLRNLNTSNDELVVAQSFVIACGAVCTPQILWNSNIRPHALGRYLSEQSMTFCQIVLKRSIVDSIATDPRFAAKVEAHKKKHPDDVLPIPFHEPEPQVMIPYTSDFPWHVQVHRYAFGDVGPKADPRVVVDLRFFGKSDIVEENRVTFGPNPKLRDWEAGVTDTYGMPQPTFHVKRTNADGDRDQRMMNDMTNVANILGGYLPGSYPQFMAPGLAQHITGTTRIGTDDQTSVADPTSKVHNFDNLWVGGNGCIPDATACNPTRTSVAYALKGAEAVVSYLGVS.

Residues 1 to 25 constitute a propeptide that is removed on maturation; the sequence is MPIRLSKEKINDLLQRSQGDLTSSQ. Residue H158 is modified to Tele-8alpha-FAD histidine. 2 residues coordinate substrate: Q392 and H394. The active-site Proton acceptor is the H498. Residue N541 is part of the active site.

It belongs to the GMC oxidoreductase family. As to quaternary structure, homotetramer. Requires FAD as cofactor.

It carries out the reaction D-glucose + O2 = 2-dehydro-D-glucose + H2O2. In terms of biological role, catalyzes the oxidation of various aldopyranoses and disaccharides on carbon-2 to the corresponding 2-keto sugars concomitant with the reduction of O(2) to H(2)O(2). The preferred substrate is D-glucose which is converted to 2-dehydro-D-glucose. Acts also on D-xylose, L-sorbose, D-galactose and 1,5-anhydroglucitol, a diagnostic marker of diabetes mellitus. The sequence is that of Pyranose 2-oxidase (p2ox) from Tricholoma matsutake (Matsutake mushroom).